The sequence spans 221 residues: Serine/arginine-rich splicing factor 2 (221 aa).

Residue Ser2 is modified to N-acetylserine. The residue at position 2 (Ser2) is a Phosphoserine. One can recognise an RRM domain in the interval 14-92 (TSLKVDNLTY…RELRVQMARY (79 aa)). Phosphothreonine occurs at positions 22 and 25. Ser26 is subject to Phosphoserine. Residue Lys52 is modified to N6-acetyllysine. Positions 92 to 221 (YGRPPDSHHS…SPEEEGAVSS (130 aa)) are disordered. Composition is skewed to basic residues over residues 117–171 (RRSR…RSKS) and 179–189 (SRSRSRSRSRS). 7 positions are modified to phosphoserine: Ser189, Ser191, Ser204, Ser206, Ser208, Ser212, and Ser220. Positions 212–221 (SPEEEGAVSS) are enriched in acidic residues.

The protein belongs to the splicing factor SR family. As to quaternary structure, in vitro, self-associates and binds SRSF1/SFRS1 (ASF/SF2), SNRP70 and U2AF1 but not U2AF2. Binds SREK1/SFRS12. Interacts with CCNL1 and CCNL2. Interacts with SCAF11. Interacts with ZRSR2/U2AF1-RS2. Interacts with CCDC55 (via C-terminus). Interacts with BRDT. Extensively phosphorylated on serine residues in the RS domain. Phosphorylated by SRPK2 and this causes its redistribution from the nuclear speckle to nucleoplasm and controls cell fate decision in response to cisplatin treatment. KAT5/TIP60 inhibits its phosphorylation by preventing SRPK2 nuclear translocation. In terms of processing, acetylation on Lys-52 by KAT5/TIP60 promotes its proteasomal degradation. This effect is counterbalanced by HDAC6, which positively controls SRSF2 protein level by deacetylating it and preventing its proteasomal degradation.

It is found in the nucleus. It localises to the nucleoplasm. The protein localises to the nucleus speckle. In terms of biological role, necessary for the splicing of pre-mRNA. It is required for formation of the earliest ATP-dependent splicing complex and interacts with spliceosomal components bound to both the 5'- and 3'-splice sites during spliceosome assembly. It also is required for ATP-dependent interactions of both U1 and U2 snRNPs with pre-mRNA. Interacts with other spliceosomal components, via the RS domains, to form a bridge between the 5'- and 3'-splice site binding components, U1 snRNP and U2AF. Binds to purine-rich RNA sequences, either 5'-AGSAGAGTA-3' (S=C or G) or 5'-GTTCGAGTA-3'. Can bind to beta-globin mRNA and commit it to the splicing pathway. The phosphorylated form (by SRPK2) is required for cellular apoptosis in response to cisplatin treatment. The polypeptide is Serine/arginine-rich splicing factor 2 (SRSF2) (Pan troglodytes (Chimpanzee)).